The following is a 75-amino-acid chain: Exodeoxyribonuclease 7 small subunit (75 aa).

It belongs to the XseB family. In terms of assembly, heterooligomer composed of large and small subunits.

It localises to the cytoplasm. The catalysed reaction is Exonucleolytic cleavage in either 5'- to 3'- or 3'- to 5'-direction to yield nucleoside 5'-phosphates.. Bidirectionally degrades single-stranded DNA into large acid-insoluble oligonucleotides, which are then degraded further into small acid-soluble oligonucleotides. The sequence is that of Exodeoxyribonuclease 7 small subunit from Listeria monocytogenes serotype 4b (strain CLIP80459).